The following is a 259-amino-acid chain: Anti-Pycsar protein Apyc1 (259 aa).

Residues 21–233 are beta-lactamase-like; that stretch reads YNNSALVTFT…KQQNKIFLMH (213 aa). The Zn(2+) site is built by H64, H66, D68, H69, H154, D178, and H233.

Belongs to the anti-Pycsar protein Apyc1 family. As to quaternary structure, homodimer. The cofactor is Zn(2+).

The enzyme catalyses 3',5'-cyclic CMP + H2O = CMP + H(+). It catalyses the reaction 3',5'-cyclic UMP + H2O = UMP + H(+). Counteracts the host Pycsar antiviral defense system. Phosphodiesterase that enables metal-dependent hydrolysis of host cyclic nucleotide Pycsar defense signals such as cCMP and cUMP. The chain is Anti-Pycsar protein Apyc1 from Bacillus subtilis.